Reading from the N-terminus, the 88-residue chain is Small ribosomal subunit protein bS16c (88 aa).

Belongs to the bacterial ribosomal protein bS16 family.

It localises to the plastid. The protein resides in the chloroplast. The chain is Small ribosomal subunit protein bS16c from Oenothera elata subsp. hookeri (Hooker's evening primrose).